We begin with the raw amino-acid sequence, 240 residues long: 4-hydroxy-tetrahydrodipicolinate reductase (240 aa).

Residues Ala-79–Thr-81 and Ser-103–Met-106 each bind NAD(+). His-135 acts as the Proton donor/acceptor in catalysis. His-136 lines the (S)-2,3,4,5-tetrahydrodipicolinate pocket. Lys-139 serves as the catalytic Proton donor. Gly-145–Thr-146 is a (S)-2,3,4,5-tetrahydrodipicolinate binding site.

The protein belongs to the DapB family.

The protein localises to the cytoplasm. The enzyme catalyses (S)-2,3,4,5-tetrahydrodipicolinate + NAD(+) + H2O = (2S,4S)-4-hydroxy-2,3,4,5-tetrahydrodipicolinate + NADH + H(+). It catalyses the reaction (S)-2,3,4,5-tetrahydrodipicolinate + NADP(+) + H2O = (2S,4S)-4-hydroxy-2,3,4,5-tetrahydrodipicolinate + NADPH + H(+). Its pathway is amino-acid biosynthesis; L-lysine biosynthesis via DAP pathway; (S)-tetrahydrodipicolinate from L-aspartate: step 4/4. Catalyzes the conversion of 4-hydroxy-tetrahydrodipicolinate (HTPA) to tetrahydrodipicolinate. The protein is 4-hydroxy-tetrahydrodipicolinate reductase of Staphylococcus aureus (strain bovine RF122 / ET3-1).